Reading from the N-terminus, the 402-residue chain is Serine--glyoxylate aminotransferase (402 aa).

At Lys-201 the chain carries N6-(pyridoxal phosphate)lysine.

It belongs to the class-V pyridoxal-phosphate-dependent aminotransferase family. Pyridoxal 5'-phosphate serves as cofactor.

The catalysed reaction is glyoxylate + L-serine = 3-hydroxypyruvate + glycine. It functions in the pathway one-carbon metabolism; formaldehyde assimilation via serine pathway. The polypeptide is Serine--glyoxylate aminotransferase (Methylorubrum extorquens (strain ATCC 14718 / DSM 1338 / JCM 2805 / NCIMB 9133 / AM1) (Methylobacterium extorquens)).